Here is a 219-residue protein sequence, read N- to C-terminus: MTDRIPALQAWYGGTFDPIHYGHLRAVEALAREVKLTQVTILPNNVPPHRPQPGASSLQRKAMVELAIAGHPLFRLDTRELQRATPSWTSETMVQLRLEAGPDAPLAFIIGQDSLLTLRTWHNYEALLACCHLLVCRRPGYPVEMKTDEDQRWLAPRLARHVDELHREPAGKIYLADTPLYPISATDIRARLASHQSCDDLLPPAVLAYIQRHALYRPA.

It belongs to the NadD family.

It carries out the reaction nicotinate beta-D-ribonucleotide + ATP + H(+) = deamido-NAD(+) + diphosphate. The protein operates within cofactor biosynthesis; NAD(+) biosynthesis; deamido-NAD(+) from nicotinate D-ribonucleotide: step 1/1. In terms of biological role, catalyzes the reversible adenylation of nicotinate mononucleotide (NaMN) to nicotinic acid adenine dinucleotide (NaAD). In Cronobacter sakazakii (strain ATCC BAA-894) (Enterobacter sakazakii), this protein is Probable nicotinate-nucleotide adenylyltransferase.